Reading from the N-terminus, the 345-residue chain is Phosphoribosylformylglycinamidine cyclo-ligase (345 aa).

Belongs to the AIR synthase family.

Its subcellular location is the cytoplasm. It carries out the reaction 2-formamido-N(1)-(5-O-phospho-beta-D-ribosyl)acetamidine + ATP = 5-amino-1-(5-phospho-beta-D-ribosyl)imidazole + ADP + phosphate + H(+). Its pathway is purine metabolism; IMP biosynthesis via de novo pathway; 5-amino-1-(5-phospho-D-ribosyl)imidazole from N(2)-formyl-N(1)-(5-phospho-D-ribosyl)glycinamide: step 2/2. In Shouchella clausii (strain KSM-K16) (Alkalihalobacillus clausii), this protein is Phosphoribosylformylglycinamidine cyclo-ligase.